Consider the following 95-residue polypeptide: Integration host factor subunit beta (95 aa).

This sequence belongs to the bacterial histone-like protein family. Heterodimer of an alpha and a beta chain.

Its function is as follows. This protein is one of the two subunits of integration host factor, a specific DNA-binding protein that functions in genetic recombination as well as in transcriptional and translational control. The polypeptide is Integration host factor subunit beta (Shewanella halifaxensis (strain HAW-EB4)).